The chain runs to 639 residues: Mediator of RNA polymerase II transcription subunit 17 (639 aa).

A coiled-coil region spans residues 160 to 187 (RLQNFNAAADKLLKSASRLENEVASETR).

It belongs to the Mediator complex subunit 17 family. Component of the Mediator complex.

It is found in the nucleus. In terms of biological role, component of the Mediator complex, a coactivator involved in the regulated transcription of nearly all RNA polymerase II-dependent genes. Mediator functions as a bridge to convey information from gene-specific regulatory proteins to the basal RNA polymerase II transcription machinery. Mediator is recruited to promoters by direct interactions with regulatory proteins and serves as a scaffold for the assembly of a functional preinitiation complex with RNA polymerase II and the general transcription factors. The sequence is that of Mediator of RNA polymerase II transcription subunit 17 (srb4) from Neosartorya fischeri (strain ATCC 1020 / DSM 3700 / CBS 544.65 / FGSC A1164 / JCM 1740 / NRRL 181 / WB 181) (Aspergillus fischerianus).